The sequence spans 202 residues: MRLAAENLSGERGGETVFSGVSFALGQSETLLVTGPNGAGKSTLLRIIAGLLPVAKGHVAFSGGGEIFPDAGAACHYLGHLNGMKPALSIEENLVFWRDFLGEERLSPLEALEIVGLGEIAHLPFGYLSTGQRRRTAIARLLVSYRPVWLLDEPTAGLDRASEAQFAEVMRAHLSAGGIIVAATHLPLGLEGTQELKMGAGN.

Residues 3–200 (LAAENLSGER…EGTQELKMGA (198 aa)) enclose the ABC transporter domain. 35–42 (GPNGAGKS) contacts ATP.

It belongs to the ABC transporter superfamily. CcmA exporter (TC 3.A.1.107) family. As to quaternary structure, the complex is composed of two ATP-binding proteins (CcmA) and two transmembrane proteins (CcmB).

The protein resides in the cell inner membrane. The catalysed reaction is heme b(in) + ATP + H2O = heme b(out) + ADP + phosphate + H(+). Part of the ABC transporter complex CcmAB involved in the biogenesis of c-type cytochromes; once thought to export heme, this seems not to be the case, but its exact role is uncertain. Responsible for energy coupling to the transport system. The polypeptide is Cytochrome c biogenesis ATP-binding export protein CcmA (Chelativorans sp. (strain BNC1)).